Here is a 271-residue protein sequence, read N- to C-terminus: Phosphatidylglycerol--prolipoprotein diacylglyceryl transferase (271 aa).

7 helical membrane passes run 25–45, 60–80, 103–123, 134–154, 181–201, 209–229, and 235–255; these read WYGIMYVIALLLALLLAKFFV, YFIWVEIGVILGARLGYILIY, FVGIRGMSYHGAIIGFLIATL, WIFLDLVALSVPLAYVFGRIG, PSQLYEAFLEGIVVFIIVYLA, GELILVYAGAYSLARFICEFY, and GIGFVLWGMSMGQILSFIMFI. Arginine 152 contacts a 1,2-diacyl-sn-glycero-3-phospho-(1'-sn-glycerol).

Belongs to the Lgt family.

It localises to the cell inner membrane. The catalysed reaction is L-cysteinyl-[prolipoprotein] + a 1,2-diacyl-sn-glycero-3-phospho-(1'-sn-glycerol) = an S-1,2-diacyl-sn-glyceryl-L-cysteinyl-[prolipoprotein] + sn-glycerol 1-phosphate + H(+). It functions in the pathway protein modification; lipoprotein biosynthesis (diacylglyceryl transfer). Catalyzes the transfer of the diacylglyceryl group from phosphatidylglycerol to the sulfhydryl group of the N-terminal cysteine of a prolipoprotein, the first step in the formation of mature lipoproteins. The protein is Phosphatidylglycerol--prolipoprotein diacylglyceryl transferase of Campylobacter jejuni subsp. jejuni serotype O:6 (strain 81116 / NCTC 11828).